Consider the following 317-residue polypeptide: E3 ubiquitin-protein ligase NRDP1 (317 aa).

Residues 18–57 form an RING-type; degenerate zinc finger; sequence CPICSGVLEEPVQAPHCEHAFCNACITQWFSQQQTCPVDR. Residues 78 to 138 form an SIAH-type; degenerate zinc finger; that stretch reads KLQIACDNAV…LPNHNCIKHL (61 aa).

As to quaternary structure, interacts with USP8, ERBB3, PRKN and BIRC6. Interacts with CSF2RB, EPOR, IL3RA, MYD88 and TBK1. Interacts with Clec16a. Autoubiquitinated. Autoubiquitination leads to proteasomal degradation. Deubiquitinated by USP8 to get stabilized which induces apoptosis.

The enzyme catalyses S-ubiquitinyl-[E2 ubiquitin-conjugating enzyme]-L-cysteine + [acceptor protein]-L-lysine = [E2 ubiquitin-conjugating enzyme]-L-cysteine + N(6)-ubiquitinyl-[acceptor protein]-L-lysine.. It functions in the pathway protein modification; protein ubiquitination. Acts as E3 ubiquitin-protein ligase and regulates the degradation of target proteins. Polyubiquitinates MYD88. Negatively regulates MYD88-dependent production of pro-inflammatory cytokines. Can promote TRIF-dependent production of type I interferon and inhibits infection with vesicular stomatitis virus. Also promotes activation of TBK1 and IRF3. Involved in the ubiquitination of erythropoietin (EPO) and interleukin-3 (IL-3) receptors. Thus, through maintaining basal levels of cytokine receptors, RNF41 is involved in the control of hematopoietic progenitor cell differentiation into myeloerythroid lineages. Contributes to the maintenance of steady-state ERBB3 levels by mediating its growth factor-independent degradation. Involved in the degradation of the inhibitor of apoptosis BIRC6 and thus is an important regulator of cell death by promoting apoptosis. Also acts as a PRKN modifier that accelerates its degradation, resulting in a reduction of PRKN activity, influencing the balance of intracellular redox state. The RNF41-PRKN pathway regulates autophagosome-lysosome fusion during late mitophagy. Mitophagy is a selective form of autophagy necessary for mitochondrial quality control. This is E3 ubiquitin-protein ligase NRDP1 (Rnf41) from Mus musculus (Mouse).